Reading from the N-terminus, the 192-residue chain is RNA pyrophosphohydrolase (192 aa).

In terms of domain architecture, Nudix hydrolase spans 6–149; sequence GYRPNVGIVI…KKDVYRKVMK (144 aa). The Nudix box motif lies at 38–59; sequence GGINDNETAEQAMYRELYEEAG.

This sequence belongs to the Nudix hydrolase family. RppH subfamily. A divalent metal cation serves as cofactor.

Accelerates the degradation of transcripts by removing pyrophosphate from the 5'-end of triphosphorylated RNA, leading to a more labile monophosphorylated state that can stimulate subsequent ribonuclease cleavage. The polypeptide is RNA pyrophosphohydrolase (Histophilus somni (strain 129Pt) (Haemophilus somnus)).